The sequence spans 424 residues: Tyrosine--tRNA ligase (424 aa).

Tyr37 provides a ligand contact to L-tyrosine. Positions Pro42 to His51 match the 'HIGH' region motif. L-tyrosine contacts are provided by Tyr175 and Gln179. Residues Lys235–Thr239 carry the 'KMSKS' region motif. Position 238 (Lys238) interacts with ATP. Residues Ala357–Gly414 enclose the S4 RNA-binding domain.

The protein belongs to the class-I aminoacyl-tRNA synthetase family. TyrS type 1 subfamily. Homodimer.

The protein localises to the cytoplasm. It catalyses the reaction tRNA(Tyr) + L-tyrosine + ATP = L-tyrosyl-tRNA(Tyr) + AMP + diphosphate + H(+). Catalyzes the attachment of tyrosine to tRNA(Tyr) in a two-step reaction: tyrosine is first activated by ATP to form Tyr-AMP and then transferred to the acceptor end of tRNA(Tyr). In Yersinia pestis bv. Antiqua (strain Antiqua), this protein is Tyrosine--tRNA ligase.